We begin with the raw amino-acid sequence, 551 residues long: uncharacterized protein (551 aa).

Helical transmembrane passes span 1-21 (MIAY…IVNS), 25-45 (WTYF…LMVS), 99-119 (GALF…FGFN), 124-144 (LGVL…SLMW), 266-286 (FAFL…GVFY), and 490-510 (FLDL…SAED).

The protein resides in the cell membrane. This is an uncharacterized protein from Haemophilus influenzae (strain ATCC 51907 / DSM 11121 / KW20 / Rd).